The chain runs to 296 residues: Bidirectional sugar transporter SWEET13 (296 aa).

Topologically, residues 1–9 are extracellular; sequence MAGLSLQHP. Residues 10-30 traverse the membrane as a helical segment; it reads WAFAFGLLGNLISFTTYLAPI. Residues 13–98 enclose the MtN3/slv 1 domain; sequence AFGLLGNLIS…VMYLAYAPKK (86 aa). The Cytoplasmic portion of the chain corresponds to 31–45; that stretch reads PTFYRIYKSKSTEGF. The helical transmembrane segment at 46-66 threads the bilayer; it reads QSVPYVVALFSAMLWIFYALI. The Extracellular portion of the chain corresponds to 67–71; sequence KSNEA. Residues 72-92 form a helical membrane-spanning segment; it reads LLITINAAGCVIETIYIVMYL. At 93-105 the chain is on the cytoplasmic side; that stretch reads AYAPKKAKVFTTK. Residues 106–126 traverse the membrane as a helical segment; that stretch reads ILLLLNVGVFGVILLLTLLLS. Over 127–133 the chain is Extracellular; the sequence is HGEQRVV. A helical membrane pass occupies residues 134-154; sequence SLGWVCVAFSVSVFVAPLSII. One can recognise a MtN3/slv 2 domain in the interval 134–217; sequence SLGWVCVAFS…MGLYVFYMNA (84 aa). Residues 155–167 lie on the Cytoplasmic side of the membrane; that stretch reads KRVIQSRSVEYMP. The chain crosses the membrane as a helical span at residues 168–188; sequence FSLSLTLTLSAVVWFLYGLLI. The Extracellular portion of the chain corresponds to 189-192; it reads KDKY. Residues 193 to 213 traverse the membrane as a helical segment; the sequence is VALPNILGFTFGVVQMGLYVF. Residues 214 to 296 lie on the Cytoplasmic side of the membrane; sequence YMNATPVAGE…PPRAVEVAAV (83 aa).

The protein belongs to the SWEET sugar transporter family. Forms homooligomers and/or heterooligomers.

It localises to the cell membrane. Its function is as follows. Mediates both low-affinity uptake and efflux of sugar across the plasma membrane. In terms of biological role, confers blight susceptibility. Confers TAL effector-mediated susceptibility to Xanthomonas oryzae pv. oryzae. This chain is Bidirectional sugar transporter SWEET13 (SWEET13), found in Oryza sativa subsp. japonica (Rice).